The primary structure comprises 129 residues: Small ribosomal subunit protein uS8 (129 aa).

This sequence belongs to the universal ribosomal protein uS8 family. Part of the 30S ribosomal subunit. Contacts proteins S5 and S12.

Its function is as follows. One of the primary rRNA binding proteins, it binds directly to 16S rRNA central domain where it helps coordinate assembly of the platform of the 30S subunit. This Dichelobacter nodosus (strain VCS1703A) protein is Small ribosomal subunit protein uS8.